The sequence spans 689 residues: MADPASYKPARQDIPTNPGVYRFRDEHGRVIYVGKAKNLRNRVSSYFAPLHQLAPKTRAMVTTAAAVQWTVVGSEFESLQLEYTWIKEFAPRFNIAYRDDKSYPYLAVTMSEDVPRAMVTRGEKKPGNRYFGPYSQAWAIRDTLDALLRVFPVRTCTTGVYQRAERSGRPCLLGYIDKCSAPCVGNISQEEHRELADDLCRFMAGHAKPYIRELTRQMNEAAECMDFETAAARRDDVGALERVFERNTVVLTDSTDADFFAIAEDELEAAVQVFHVRGGRIRGQRGWITEKVEDVTTAQLMTNLLQQVYGEAQSGLAPAASGRRRTARHGSEDVVGQHRRTSELAYRQDTIPRAVHVSVLPDEADEIRAWLSELRGSQVTVQRPQRGDKAQLLETVAENARQALTLHKSRRAGDLTTRSASLQQLQEALGLPDALMRIECYDISHVQGTNVVASMVVFEDGLPRKSEYRKFSITGDAARDDTASMYDVIHRRFSRHVEQQRRAAEKGVSTGEVAADDDEGTTRAFAYPPNLVIVDGGPPQVAAAQRALDDLRVTDVHVVGLAKRLEEVWVPDDEFPVILPRASEGLFLMQRVRDEAHRFAITFHRQKRSKAMTVSALDEVPGLGPAKQKALLKHFGSVKKLRAATAEQILEVKGFGPALAVKVAQALGGEAAASSTAPAVDTGTGELLD.

The GIY-YIG domain maps to 16 to 95; it reads TNPGVYRFRD…IKEFAPRFNI (80 aa). A UVR domain is found at 208–243; that stretch reads KPYIRELTRQMNEAAECMDFETAAARRDDVGALERV. Residues 316–337 form a disordered region; the sequence is LAPAASGRRRTARHGSEDVVGQ.

The protein belongs to the UvrC family. In terms of assembly, interacts with UvrB in an incision complex.

The protein resides in the cytoplasm. Its function is as follows. The UvrABC repair system catalyzes the recognition and processing of DNA lesions. UvrC both incises the 5' and 3' sides of the lesion. The N-terminal half is responsible for the 3' incision and the C-terminal half is responsible for the 5' incision. In Kocuria rhizophila (strain ATCC 9341 / DSM 348 / NBRC 103217 / DC2201), this protein is UvrABC system protein C.